The primary structure comprises 719 residues: MKEFFATCPKGLENLLADELTTLGAEQVRETVAGVHFKGELAIGYKACLWSRFASRIVLVLSEFQMNDDLDLYLGAHTIPWEEHFSGTSTIAVDFTGTNPAIRNTQYGALKIKDAIVDRFTKRGHVRPDVDKKAPDIRIMAHLGKGKANITLDLSGPALHQRFYRQGTGEAPLKENLACAMIARSGWAGEPMMDPMCGSGTLLIEAAFIAADMAPALRRERFGFDRWLQHDSELWQSLMMEAQVRAKRGMQRCEVKLFGCDADPRVLMKARDNAKAAGVAHLITFKQADVTQLENPLPMPAVVEGEVSQEEARQVGMLISNPPYGERLGEFPALLEVHQALGDALRRGFQGWRVSILSASPELLSCLRLRADKQYRLFNGALECQLRNYQIALDSVASQKEVAQDFANRLRKNLKTLEKWASKEGIDCYRLYDADLPEYNAAIDRYQDYLVVQEYAAPKDIPAQKTRQRLLDMVQAAIKVTGMDGEKVILKVRERQEGKQQYQKLAAEQHRMEVQEYGARLWVNLYDYLDTGLFLDHRQTRRMLGQMAKGKRFLNLFAYTGSATVHAGLGGASETTTVDMSHTYLNWAQDNMRLNSLVGRQHKFVQADCLKWLSEADDQYDLIFIDPPTFSNSKRMDESFDVQRDHLLLMQHLKRLLAADGTLVFSNNKRHFKMDLAGLEAAGLKAQNITSKTRPKDFERNQHIHNCWIITHAEAPAEA.

The THUMP domain maps to 43-154 (IGYKACLWSR…KGKANITLDL (112 aa)).

It belongs to the methyltransferase superfamily. RlmKL family.

It is found in the cytoplasm. It catalyses the reaction guanosine(2445) in 23S rRNA + S-adenosyl-L-methionine = N(2)-methylguanosine(2445) in 23S rRNA + S-adenosyl-L-homocysteine + H(+). The enzyme catalyses guanosine(2069) in 23S rRNA + S-adenosyl-L-methionine = N(2)-methylguanosine(2069) in 23S rRNA + S-adenosyl-L-homocysteine + H(+). Its function is as follows. Specifically methylates the guanine in position 2445 (m2G2445) and the guanine in position 2069 (m7G2069) of 23S rRNA. The sequence is that of Ribosomal RNA large subunit methyltransferase K/L from Aeromonas salmonicida (strain A449).